Here is a 590-residue protein sequence, read N- to C-terminus: Probable metalloendopeptidase G1-type (590 aa).

A Zn(2+)-binding site is contributed by histidine 41. The active site involves glutamate 44. Histidine 45 contributes to the Zn(2+) binding site.

This sequence belongs to the peptidase M44 family. Zn(2+) is required as a cofactor.

In terms of biological role, seems to be involved in viral proteins maturation by cleavage at Ala-Gly-|-Xaa motifs. In Oryctolagus cuniculus (Rabbit), this protein is Probable metalloendopeptidase G1-type.